The chain runs to 340 residues: Dof zinc finger protein DOF2.2 (340 aa).

The tract at residues Pro12 to Glu33 is disordered. The segment at Leu94–Lys148 adopts a Dof-type zinc-finger fold. Cys96, Cys99, Cys121, and Cys124 together coordinate Zn(2+). Disordered stretches follow at residues Pro138 to Val180 and Gly301 to Met340. The segment covering Ser151–Ser165 has biased composition (low complexity). Polar residues-rich tracts occupy residues Thr166–Val180 and Gly309–Ser331.

The protein localises to the nucleus. Its function is as follows. Transcription factor that binds specifically to a 5'-AA[AG]G-3' consensus core sequence. The sequence is that of Dof zinc finger protein DOF2.2 (DOF2.2) from Arabidopsis thaliana (Mouse-ear cress).